Consider the following 535-residue polypeptide: MQLTVWTYEGPPHVGAMRVATGMEGLHYVLHAPQGDTYADLLFTMIERRNKRPPVTYTTFAARDLGKDTAELFMKAARDAYERFKPQAMIVGASCTGSLIQDDPGGLAKSLGFPIPVVAIDLPAYQRKENWGAAETLYQLVRALAGPKAPAPGAKRPERAPGVRPTCNLLGPTALGFRHRDDITEITGLLGKLGIDVNVVAPMGATPADIARLGDADFNVVMYPEIAGQAASWLHRIFHQPFTKTVPIGVSATRDFIKEVAQLAGVDATAVLEAASTRLPWYSHSVDSTYLTNKRVFIFGDATHAIAAARIASEELGFKVVGLGSYSREFGRELREAAKHYDVEPLITDDYLEVEAKVAELHPELVLGTQMERHIAKRLGVPCAVISAPVHVQDFPARYAPQMGFEGANVIFDTWVHPLMMGLEEHLLTMFKDDFEFKDGAMPSHLGTGHAAPVAEVIAESAPPAVAATAPEIVSVANAAASAAVWAPEAEKELQKIPFFVRGKARRNTERFANENGVATITVETLYDAKAHFAR.

A [4Fe-4S] cluster-binding site is contributed by D36. D287 serves as the catalytic Proton donor. 422-423 (GL) contributes to the substrate binding site.

Belongs to the ChlB/BchB/BchZ family. In terms of assembly, protochlorophyllide reductase is composed of three subunits; BchL, BchN and BchB. Forms a heterotetramer of two BchB and two BchN subunits. Requires [4Fe-4S] cluster as cofactor.

It catalyses the reaction chlorophyllide a + oxidized 2[4Fe-4S]-[ferredoxin] + 2 ADP + 2 phosphate = protochlorophyllide a + reduced 2[4Fe-4S]-[ferredoxin] + 2 ATP + 2 H2O. It participates in porphyrin-containing compound metabolism; bacteriochlorophyll biosynthesis (light-independent). Its function is as follows. Component of the dark-operative protochlorophyllide reductase (DPOR) that uses Mg-ATP and reduced ferredoxin to reduce ring D of protochlorophyllide (Pchlide) to form chlorophyllide a (Chlide). This reaction is light-independent. The NB-protein (BchN-BchB) is the catalytic component of the complex. This is Light-independent protochlorophyllide reductase subunit B from Rhodopseudomonas palustris (strain BisB5).